The chain runs to 557 residues: DNA ligase (557 aa).

An ATP-binding site is contributed by Glu251. The N6-AMP-lysine intermediate role is filled by Lys253. ATP-binding residues include Arg258, Arg273, Glu303, Phe342, Arg418, and Lys424.

This sequence belongs to the ATP-dependent DNA ligase family. The cofactor is Mg(2+).

The catalysed reaction is ATP + (deoxyribonucleotide)n-3'-hydroxyl + 5'-phospho-(deoxyribonucleotide)m = (deoxyribonucleotide)n+m + AMP + diphosphate.. Its function is as follows. DNA ligase that seals nicks in double-stranded DNA during DNA replication, DNA recombination and DNA repair. In Methanosphaera stadtmanae (strain ATCC 43021 / DSM 3091 / JCM 11832 / MCB-3), this protein is DNA ligase.